Reading from the N-terminus, the 147-residue chain is Antiholin-like protein LrgA (147 aa).

4 helical membrane passes run 12–32 (PAHFFHQVIVIALVLFVSKII), 35–55 (FMPIPMPGSVIGLVLLFVLLC), 74–94 (NIGLLFVPAGISVVNSLGVIS), and 98–118 (FLIIGLIIVSTILLLICTGYV).

This sequence belongs to the CidA/LrgA family. LrgA subfamily.

The protein localises to the cell membrane. Inhibits the expression or activity of extracellular murein hydrolases by interacting, possibly with LrgB, with the holin-like proteins CidA and/or CidB. The LrgAB and CidAB proteins may affect the proton motive force of the membrane. May be involved in programmed cell death (PCD), possibly triggering PCD in response to antibiotics and environmental stresses. The sequence is that of Antiholin-like protein LrgA from Staphylococcus aureus (strain MSSA476).